Consider the following 578-residue polypeptide: Triokinase/FMN cyclase (578 aa).

In terms of domain architecture, DhaK spans 9–336 (SVAGCADDAL…IDAETTASAW (328 aa)). Dihydroxyacetone-binding positions include 56 to 59 (GSGH), lysine 109, and aspartate 114. Histidine 221 acts as the Tele-hemiaminal-histidine intermediate in catalysis. Position 350 is a phosphoserine (serine 350). Positions 372-571 (KQMVLVLEWV…AAAILRAILE (200 aa)) constitute a DhaL domain. ATP is bound by residues 401–404 (DGDC), 446–447 (SS), glycine 486, and 494–495 (TM). A phosphoserine mark is found at serine 511 and serine 545. An ATP-binding site is contributed by 556–558 (DPG).

As to quaternary structure, homodimer. Interacts with IFIH1 (via the CARD domains), the interaction is inhibited by viral infection. Mg(2+) is required as a cofactor. It depends on Mn(2+) as a cofactor. Requires Co(2+) as cofactor.

It carries out the reaction dihydroxyacetone + ATP = dihydroxyacetone phosphate + ADP + H(+). It catalyses the reaction D-glyceraldehyde + ATP = D-glyceraldehyde 3-phosphate + ADP + H(+). The catalysed reaction is FAD = riboflavin cyclic-4',5'-phosphate + AMP + H(+). With respect to regulation, each activity is inhibited by the substrate(s) of the other. Catalyzes both the phosphorylation of dihydroxyacetone and of glyceraldehyde, and the splitting of ribonucleoside diphosphate-X compounds among which FAD is the best substrate. Represses IFIH1-mediated cellular antiviral response. The chain is Triokinase/FMN cyclase (TKFC) from Bos taurus (Bovine).